The following is an 868-amino-acid chain: Translation initiation factor IF-2 (868 aa).

The segment at 201-269 is disordered; it reads KEEVKPEKVS…GTEKSDKYRE (69 aa). A compositionally biased stretch (basic residues) spans 249–260; it reads RGGRSKFKKKKG. Residues 368-537 enclose the tr-type G domain; it reads GRAPVVTIMG…LLQSEVLELK (170 aa). The interval 377–384 is G1; it reads GHVDHGKT. 377–384 is a GTP binding site; sequence GHVDHGKT. The interval 402-406 is G2; it reads GITQH. The segment at 423–426 is G3; it reads DTPG. Residues 423 to 427 and 477 to 480 contribute to the GTP site; these read DTPGH and NKMD. Residues 477 to 480 form a G4 region; that stretch reads NKMD. The interval 513 to 515 is G5; that stretch reads SAK.

This sequence belongs to the TRAFAC class translation factor GTPase superfamily. Classic translation factor GTPase family. IF-2 subfamily.

It is found in the cytoplasm. Its function is as follows. One of the essential components for the initiation of protein synthesis. Protects formylmethionyl-tRNA from spontaneous hydrolysis and promotes its binding to the 30S ribosomal subunits. Also involved in the hydrolysis of GTP during the formation of the 70S ribosomal complex. In Legionella pneumophila (strain Corby), this protein is Translation initiation factor IF-2.